The following is a 93-amino-acid chain: Pyrimidine/purine nucleoside phosphorylase (93 aa).

This sequence belongs to the nucleoside phosphorylase PpnP family.

The catalysed reaction is a purine D-ribonucleoside + phosphate = a purine nucleobase + alpha-D-ribose 1-phosphate. It catalyses the reaction adenosine + phosphate = alpha-D-ribose 1-phosphate + adenine. It carries out the reaction cytidine + phosphate = cytosine + alpha-D-ribose 1-phosphate. The enzyme catalyses guanosine + phosphate = alpha-D-ribose 1-phosphate + guanine. The catalysed reaction is inosine + phosphate = alpha-D-ribose 1-phosphate + hypoxanthine. It catalyses the reaction thymidine + phosphate = 2-deoxy-alpha-D-ribose 1-phosphate + thymine. It carries out the reaction uridine + phosphate = alpha-D-ribose 1-phosphate + uracil. The enzyme catalyses xanthosine + phosphate = alpha-D-ribose 1-phosphate + xanthine. Functionally, catalyzes the phosphorolysis of diverse nucleosides, yielding D-ribose 1-phosphate and the respective free bases. Can use uridine, adenosine, guanosine, cytidine, thymidine, inosine and xanthosine as substrates. Also catalyzes the reverse reactions. This is Pyrimidine/purine nucleoside phosphorylase from Tolumonas auensis (strain DSM 9187 / NBRC 110442 / TA 4).